Consider the following 550-residue polypeptide: Integral membrane protein DGCR2/IDD (550 aa).

Residues 1–20 (MVPKADSGAFLLLFLLVLTV) form the signal peptide. The Extracellular portion of the chain corresponds to 21–349 (TEPLRPELRC…LFDSMASGMR (329 aa)). The region spanning 28–68 (LRCNPGQFACRSGTIQCIPLPWQCDGWATCEDESDEANCPE) is the LDL-receptor class A domain. 3 disulfides stabilise this stretch: Cys30-Cys44, Cys37-Cys57, and Cys51-Cys66. Residues 69-92 (VTGEVRPHHGKEAVDPRQGRARGG) form a disordered region. Basic and acidic residues predominate over residues 71 to 92 (GEVRPHHGKEAVDPRQGRARGG). Positions 115–241 (CPTGWHHYEG…FCAQLQCFHF (127 aa)) constitute a C-type lectin domain. Cystine bridges form between Cys145-Cys265 and Cys233-Cys257. 2 N-linked (GlcNAc...) asparagine glycosylation sites follow: Asn149 and Asn196. The 64-residue stretch at 270-333 (TCVDIKDNVV…PKECCKFMCL (64 aa)) folds into the VWFC domain. The helical transmembrane segment at 350–368 (LVVSCISSFLILSLLLFMV) threads the bilayer. Residues 369–550 (HRLRQRRRER…HSRSSLNTVV (182 aa)) are Cytoplasmic-facing. Residue Ser381 is modified to Phosphoserine. Residues 500–550 (AGASLADLEDSADSSSALLVPPDPAQSGSTPAAEALPGGGRHSRSSLNTVV) form a disordered region.

As to expression, predominantly expressed in brain, heart, lung and fetal kidney. Low levels in liver and adult kidney.

It is found in the membrane. In terms of biological role, putative adhesion receptor, that could be involved in cell-cell or cell-matrix interactions required for normal cell differentiation and migration. The polypeptide is Integral membrane protein DGCR2/IDD (DGCR2) (Homo sapiens (Human)).